The sequence spans 41 residues: U15-myrmicitoxin-Tb1b (41 aa).

The signal sequence occupies residues 1 to 25 (MKIVKLITIFAMIATLMVTVTNGEA). Histidine 40 carries the post-translational modification Histidine amide.

Expressed by the venom gland.

Its subcellular location is the secreted. In terms of biological role, venom protein with unknown function. Does not induce paralysis when a high dose is administered by intrathoracic injection into the blowfly Lucilia caesar. The chain is U15-myrmicitoxin-Tb1b from Tetramorium bicarinatum (Tramp ant).